The following is a 147-amino-acid chain: MAESDWDTVTVLRKKGPTAAQAKSKQAITAAQRRGEEVETSKKWSAGQNKQHTITRNTAKLDRETEELHHDRVPLEVGKVIQQGRQGKGMTQKDLATKINEKPQVIADYECGKAIPNNQVMGKIERVIGLKLRGKDIGKPMDPGPKK.

The interval 1–69 is disordered; the sequence is MAESDWDTVT…KLDRETEELH (69 aa). Basic and acidic residues predominate over residues 33-42; the sequence is RRGEEVETSK. The span at 46 to 58 shows a compositional bias: polar residues; the sequence is AGQNKQHTITRNT. Residues 59–69 are compositionally biased toward basic and acidic residues; it reads AKLDRETEELH. Residues 81-135 form the HTH cro/C1-type domain; sequence IQQGRQGKGMTQKDLATKINEKPQVIADYECGKAIPNNQVMGKIERVIGLKLRGK. The segment at residues 92–111 is a DNA-binding region (H-T-H motif); that stretch reads QKDLATKINEKPQVIADYEC.

Its subcellular location is the nucleus. Probable transcriptional coactivator. The protein is Endothelial differentiation-related factor 1 homolog (edf1) of Xenopus laevis (African clawed frog).